The following is a 253-amino-acid chain: MRILLSNDDGVHAPGIQTLAKALREFADVQVVAPDRNRSGASNSLTLESSLRTFTFENGDIAVQMGTPTDCVYLGVNALMRPRPDIVVSGINAGPNLGDDVIYSGTVAAAMEGRHLGFPALAVSLDGHKHYDTAAAVTCSILRALCKEPLRTGRILNINVPDLPLDQIKGIRVTRCGSRHPADQVIPQQDPRGNTLYWIGPPGGKCDAGPDTDFAAVDEGYVSITPLHVDLTAHNAQDVVSDWLNSVGVGTQW.

Residues Asp-8, Asp-9, Ser-39, and Asn-92 each coordinate a divalent metal cation.

It belongs to the SurE nucleotidase family. A divalent metal cation serves as cofactor.

It is found in the cytoplasm. It catalyses the reaction a ribonucleoside 5'-phosphate + H2O = a ribonucleoside + phosphate. The catalysed reaction is a ribonucleoside 3'-phosphate + H2O = a ribonucleoside + phosphate. It carries out the reaction [phosphate](n) + H2O = [phosphate](n-1) + phosphate + H(+). In terms of biological role, nucleotidase with a broad substrate specificity as it can dephosphorylate various ribo- and deoxyribonucleoside 5'-monophosphates and ribonucleoside 3'-monophosphates with highest affinity to 3'-AMP. Also hydrolyzes polyphosphate (exopolyphosphatase activity) with the preference for short-chain-length substrates (P20-25). Might be involved in the regulation of dNTP and NTP pools, and in the turnover of 3'-mononucleotides produced by numerous intracellular RNases (T1, T2, and F) during the degradation of various RNAs. This Escherichia fergusonii (strain ATCC 35469 / DSM 13698 / CCUG 18766 / IAM 14443 / JCM 21226 / LMG 7866 / NBRC 102419 / NCTC 12128 / CDC 0568-73) protein is 5'/3'-nucleotidase SurE.